A 608-amino-acid chain; its full sequence is Chaperone protein HtpG (608 aa).

The interval 1–332 (MQFQTEVNQL…VEDLPLNVSR (332 aa)) is a; substrate-binding. A b region spans residues 333–536 (EILQENQILK…KNKPDFAMQQ (204 aa)). Residues 537–608 (LLKQMGQEQN…LTKIINKAFS (72 aa)) form a c region.

Belongs to the heat shock protein 90 family. Homodimer.

The protein resides in the cytoplasm. Molecular chaperone. Has ATPase activity. This Campylobacter jejuni subsp. jejuni serotype O:23/36 (strain 81-176) protein is Chaperone protein HtpG.